A 186-amino-acid chain; its full sequence is Large ribosomal subunit protein uL22 (186 aa).

Basic and acidic residues-rich tracts occupy residues 157-167 and 177-186; these read VSKATDDEPTK and RQKEKMLRSE. The segment at 157–186 is disordered; the sequence is VSKATDDEPTKKKLSKKKLQRQKEKMLRSE.

This sequence belongs to the universal ribosomal protein uL22 family.

This Drosophila yakuba (Fruit fly) protein is Large ribosomal subunit protein uL22 (RpL17).